Reading from the N-terminus, the 35-residue chain is Potassium channel toxin alpha-KTx 6.1 (35 aa).

Intrachain disulfides connect Cys-4–Cys-25, Cys-10–Cys-30, Cys-14–Cys-32, and Cys-20–Cys-35.

It belongs to the short scorpion toxin superfamily. Potassium channel inhibitor family. Alpha-KTx 06 subfamily. As to expression, expressed by the venom gland.

It is found in the secreted. Functionally, potently and reversibly inhibits the insect voltage-gated Shaker (Sh) potassium channel (isoform alpha (B)), the mammalian voltage-gated potassium channels Kv1.2/KCNA2 (IC(50)=0.44 nM), and the calcium-activated potassium channel KCa2.3/KCNN3 (Kd=330 nM). Its effect on Kv1.3/KCNA3 is controversial, since this channel is voltage-independently inhibited in PubMed:9464266, but is not affected in PubMed:10931199. Furthermore, this toxin competes with apamin (a small conductance calcium-activated potassium channel inhibitor) for binding to rat brain synaptosomes. In Pandinus imperator (Emperor scorpion), this protein is Potassium channel toxin alpha-KTx 6.1.